A 505-amino-acid chain; its full sequence is ATP synthase subunit alpha (505 aa).

171–178 (GDRQTGKT) serves as a coordination point for ATP.

This sequence belongs to the ATPase alpha/beta chains family. In terms of assembly, F-type ATPases have 2 components, CF(1) - the catalytic core - and CF(0) - the membrane proton channel. CF(1) has five subunits: alpha(3), beta(3), gamma(1), delta(1), epsilon(1). CF(0) has three main subunits: a(1), b(2) and c(9-12). The alpha and beta chains form an alternating ring which encloses part of the gamma chain. CF(1) is attached to CF(0) by a central stalk formed by the gamma and epsilon chains, while a peripheral stalk is formed by the delta and b chains.

The protein resides in the cell inner membrane. It catalyses the reaction ATP + H2O + 4 H(+)(in) = ADP + phosphate + 5 H(+)(out). Produces ATP from ADP in the presence of a proton gradient across the membrane. The alpha chain is a regulatory subunit. The chain is ATP synthase subunit alpha from Campylobacter curvus (strain 525.92).